The chain runs to 432 residues: Glyceraldehyde-3-phosphate dehydrogenase, testis-specific (432 aa).

The interval 1–97 is testis-specific N-terminal extension; it reads MSRRDVVLTN…PPPPPPPKPA (97 aa). The segment at 40–101 is disordered; sequence PPPPKVEEPP…PPPKPAKELT (62 aa). Residues 44–55 show a composition bias toward basic and acidic residues; that stretch reads KVEEPPPPKEEP. Composition is skewed to pro residues over residues 56–67 and 75–95; these read PPPPPPPPPPQI and APPPPPPPPPPPPPPPPPPPK. NAD(+) is bound by residues 109–110, D130, K175, Y197, and T217; that span reads RI. Residues 247–249, T278, 307–308, and R330 contribute to the D-glyceraldehyde 3-phosphate site; these read SCT and TG. C248 serves as the catalytic Nucleophile. The residue at position 350 (S350) is a Phosphoserine. N412 lines the NAD(+) pocket.

This sequence belongs to the glyceraldehyde-3-phosphate dehydrogenase family. As to quaternary structure, homotetramer. Expressed in both head and flagellum of epididymal sperm.

The protein localises to the cytoplasm. It catalyses the reaction D-glyceraldehyde 3-phosphate + phosphate + NAD(+) = (2R)-3-phospho-glyceroyl phosphate + NADH + H(+). Its pathway is carbohydrate degradation; glycolysis; pyruvate from D-glyceraldehyde 3-phosphate: step 1/5. Its function is as follows. May play an important role in regulating the switch between different pathways for energy production during spermiogenesis and in the spermatozoon. Required for sperm motility and male fertility. The chain is Glyceraldehyde-3-phosphate dehydrogenase, testis-specific (Gapdhs) from Rattus norvegicus (Rat).